Consider the following 72-residue polypeptide: Beta-defensin 104 (72 aa).

An N-terminal signal peptide occupies residues 1–22 (MQRLVLLLAISLLLYQDLPVRS). Disulfide bonds link Cys30–Cys57, Cys37–Cys51, and Cys41–Cys58.

This sequence belongs to the beta-defensin family. As to expression, high expression in the testis. Gastric antrum exhibited relatively high levels. A lower expression is observed in uterus and neutrophils thyroid gland, lung, and kidney. No detectable expression in other tissues tested.

The protein resides in the secreted. Its function is as follows. Has antimicrobial activity. Synergistic effects with lysozyme and DEFB103. This chain is Beta-defensin 104 (DEFB104A), found in Homo sapiens (Human).